Here is a 464-residue protein sequence, read N- to C-terminus: ATP synthase subunit beta (464 aa).

152–159 (GGAGVGKT) contributes to the ATP binding site.

This sequence belongs to the ATPase alpha/beta chains family. F-type ATPases have 2 components, CF(1) - the catalytic core - and CF(0) - the membrane proton channel. CF(1) has five subunits: alpha(3), beta(3), gamma(1), delta(1), epsilon(1). CF(0) has three main subunits: a(1), b(2) and c(9-12). The alpha and beta chains form an alternating ring which encloses part of the gamma chain. CF(1) is attached to CF(0) by a central stalk formed by the gamma and epsilon chains, while a peripheral stalk is formed by the delta and b chains.

The protein resides in the cell membrane. The catalysed reaction is ATP + H2O + 4 H(+)(in) = ADP + phosphate + 5 H(+)(out). Produces ATP from ADP in the presence of a proton gradient across the membrane. The catalytic sites are hosted primarily by the beta subunits. This is ATP synthase subunit beta from Ureaplasma urealyticum serovar 10 (strain ATCC 33699 / Western).